The primary structure comprises 370 residues: Queuine tRNA-ribosyltransferase (370 aa).

Catalysis depends on Asp89, which acts as the Proton acceptor. Residues 89–93 (DSGGF), Asp143, Gln187, and Gly214 each bind substrate. An RNA binding region spans residues 245 to 251 (GVGTPED). Asp264 (nucleophile) is an active-site residue. Positions 269-273 (TRNAR) are RNA binding; important for wobble base 34 recognition. Residues Cys302, Cys304, Cys307, and His333 each coordinate Zn(2+).

It belongs to the queuine tRNA-ribosyltransferase family. Homodimer. Within each dimer, one monomer is responsible for RNA recognition and catalysis, while the other monomer binds to the replacement base PreQ1. Zn(2+) is required as a cofactor.

The enzyme catalyses 7-aminomethyl-7-carbaguanine + guanosine(34) in tRNA = 7-aminomethyl-7-carbaguanosine(34) in tRNA + guanine. The protein operates within tRNA modification; tRNA-queuosine biosynthesis. Functionally, catalyzes the base-exchange of a guanine (G) residue with the queuine precursor 7-aminomethyl-7-deazaguanine (PreQ1) at position 34 (anticodon wobble position) in tRNAs with GU(N) anticodons (tRNA-Asp, -Asn, -His and -Tyr). Catalysis occurs through a double-displacement mechanism. The nucleophile active site attacks the C1' of nucleotide 34 to detach the guanine base from the RNA, forming a covalent enzyme-RNA intermediate. The proton acceptor active site deprotonates the incoming PreQ1, allowing a nucleophilic attack on the C1' of the ribose to form the product. After dissociation, two additional enzymatic reactions on the tRNA convert PreQ1 to queuine (Q), resulting in the hypermodified nucleoside queuosine (7-(((4,5-cis-dihydroxy-2-cyclopenten-1-yl)amino)methyl)-7-deazaguanosine). This Aromatoleum aromaticum (strain DSM 19018 / LMG 30748 / EbN1) (Azoarcus sp. (strain EbN1)) protein is Queuine tRNA-ribosyltransferase.